The following is a 236-amino-acid chain: Small ribosomal subunit protein uS5 (236 aa).

The 64-residue stretch at 61-124 (ENQEVLDIAL…NYAKLNIIEI (64 aa)) folds into the S5 DRBM domain.

The protein belongs to the universal ribosomal protein uS5 family. As to quaternary structure, part of the 30S ribosomal subunit. Contacts protein S4.

With S4 and S12 plays an important role in translational accuracy. The protein is Small ribosomal subunit protein uS5 of Pyrococcus furiosus (strain ATCC 43587 / DSM 3638 / JCM 8422 / Vc1).